The following is a 499-amino-acid chain: Alpha-amylase A type-1/2 (499 aa).

A signal peptide spans 1 to 21; that stretch reads MMVAWWSLFLYGLQVAAPALA. An intrachain disulfide couples Cys51 to Cys59. Residues Gln56 and Trp104 each coordinate substrate. Asn142 lines the Ca(2+) pocket. Substrate is bound at residue His143. Residues Cys171 and Cys185 are joined by a disulfide bond. The Ca(2+) site is built by Glu183 and Asp196. N-linked (GlcNAc...) asparagine glycosylation is present at Asn218. Position 225 (Arg225) interacts with substrate. Ca(2+)-binding residues include Asp227, His231, and Glu251. The Nucleophile role is filled by Asp227. 230–231 serves as a coordination point for substrate; it reads KH. The active-site Proton donor is the Glu251. Gly255 is a binding site for substrate. Cys261 and Cys304 are joined by a disulfide. Residues Asp318 and Arg365 each coordinate substrate. Cys461 and Cys496 are oxidised to a cystine.

This sequence belongs to the glycosyl hydrolase 13 family. Monomer. The cofactor is Ca(2+).

It localises to the secreted. The catalysed reaction is Endohydrolysis of (1-&gt;4)-alpha-D-glucosidic linkages in polysaccharides containing three or more (1-&gt;4)-alpha-linked D-glucose units.. The protein is Alpha-amylase A type-1/2 (amy1) of Aspergillus oryzae (strain ATCC 42149 / RIB 40) (Yellow koji mold).